Reading from the N-terminus, the 75-residue chain is Metallothionein-like protein 1B (75 aa).

The protein belongs to the metallothionein superfamily. Type 15 family.

Metallothioneins have a high content of cysteine residues that bind various heavy metals. This chain is Metallothionein-like protein 1B (MT1B), found in Vicia faba (Broad bean).